The sequence spans 107 residues: Flagellar hook-basal body complex protein FliE (107 aa).

The protein belongs to the FliE family.

Its subcellular location is the bacterial flagellum basal body. The polypeptide is Flagellar hook-basal body complex protein FliE (Cupriavidus pinatubonensis (strain JMP 134 / LMG 1197) (Cupriavidus necator (strain JMP 134))).